The primary structure comprises 155 residues: Urease accessory protein UreE (155 aa).

This sequence belongs to the UreE family.

Its subcellular location is the cytoplasm. Involved in urease metallocenter assembly. Binds nickel. Probably functions as a nickel donor during metallocenter assembly. This chain is Urease accessory protein UreE, found in Synechococcus sp. (strain CC9311).